Here is a 472-residue protein sequence, read N- to C-terminus: Cysteine--tRNA ligase (472 aa).

Cysteine 29 is a binding site for Zn(2+). Residues 31-41 carry the 'HIGH' region motif; sequence PTVYNYIHIGN. Residues cysteine 214, histidine 239, and glutamate 243 each contribute to the Zn(2+) site. The short motif at 273–277 is the 'KMSKS' region element; sequence KMSKS. Lysine 276 contacts ATP.

It belongs to the class-I aminoacyl-tRNA synthetase family. Monomer. Zn(2+) is required as a cofactor.

The protein resides in the cytoplasm. The enzyme catalyses tRNA(Cys) + L-cysteine + ATP = L-cysteinyl-tRNA(Cys) + AMP + diphosphate. The protein is Cysteine--tRNA ligase of Lactobacillus gasseri (strain ATCC 33323 / DSM 20243 / BCRC 14619 / CIP 102991 / JCM 1131 / KCTC 3163 / NCIMB 11718 / NCTC 13722 / AM63).